The primary structure comprises 375 residues: Succinyl-diaminopimelate desuccinylase (375 aa).

Zn(2+) is bound at residue histidine 66. Residue aspartate 68 is part of the active site. Aspartate 99 is a Zn(2+) binding site. The active-site Proton acceptor is glutamate 133. Positions 134, 162, and 348 each coordinate Zn(2+).

This sequence belongs to the peptidase M20A family. DapE subfamily. As to quaternary structure, homodimer. Zn(2+) serves as cofactor. The cofactor is Co(2+).

It catalyses the reaction N-succinyl-(2S,6S)-2,6-diaminopimelate + H2O = (2S,6S)-2,6-diaminopimelate + succinate. It functions in the pathway amino-acid biosynthesis; L-lysine biosynthesis via DAP pathway; LL-2,6-diaminopimelate from (S)-tetrahydrodipicolinate (succinylase route): step 3/3. Functionally, catalyzes the hydrolysis of N-succinyl-L,L-diaminopimelic acid (SDAP), forming succinate and LL-2,6-diaminopimelate (DAP), an intermediate involved in the bacterial biosynthesis of lysine and meso-diaminopimelic acid, an essential component of bacterial cell walls. The polypeptide is Succinyl-diaminopimelate desuccinylase (Shigella flexneri serotype 5b (strain 8401)).